We begin with the raw amino-acid sequence, 339 residues long: uncharacterized protein (339 aa).

An N-terminal signal peptide occupies residues 1 to 29 (MIKQVCKNITICSLALSTALTVFPASSYA).

Belongs to the aerolysin family.

This is an uncharacterized protein from Staphylococcus aureus (strain MRSA252).